The following is a 232-amino-acid chain: Putative ABC transporter ATP-binding protein VNG_2317G (232 aa).

The 230-residue stretch at Leu2–Pro231 folds into the ABC transporter domain. Gly34 to Thr41 contacts ATP.

Belongs to the ABC transporter superfamily.

It is found in the cell membrane. Its function is as follows. Probably part of an ABC transporter complex. Responsible for energy coupling to the transport system. The chain is Putative ABC transporter ATP-binding protein VNG_2317G from Halobacterium salinarum (strain ATCC 700922 / JCM 11081 / NRC-1) (Halobacterium halobium).